The sequence spans 235 residues: Putative N-acetylmannosamine-6-phosphate 2-epimerase (235 aa).

Belongs to the NanE family.

The enzyme catalyses an N-acyl-D-glucosamine 6-phosphate = an N-acyl-D-mannosamine 6-phosphate. Its pathway is amino-sugar metabolism; N-acetylneuraminate degradation; D-fructose 6-phosphate from N-acetylneuraminate: step 3/5. In terms of biological role, converts N-acetylmannosamine-6-phosphate (ManNAc-6-P) to N-acetylglucosamine-6-phosphate (GlcNAc-6-P). This is Putative N-acetylmannosamine-6-phosphate 2-epimerase from Edwardsiella ictaluri (strain 93-146).